The chain runs to 233 residues: MSKLTKRQKEINSRIEHEKQYTIEEAVQILNDLPPLKFKESIDIAVNLGVDPRKSDQVVRGATNLPAGTGKTKRVAVFAQGAAAEAAKEAGADIVGFEDLAESIKAGNMDFDVVIAAPDAMRVVGQLGTILGPRGLMPNPKVGTVTPNVAEAVLNAKAGQAQYRVDKAGIIHTTIGQVGFTAEQVIQNAEALISDLRRAKPATSKGTFIKKITLSSTMGPGLSIDPVPYRTAK.

It belongs to the universal ribosomal protein uL1 family. As to quaternary structure, part of the 50S ribosomal subunit.

In terms of biological role, binds directly to 23S rRNA. The L1 stalk is quite mobile in the ribosome, and is involved in E site tRNA release. Functionally, protein L1 is also a translational repressor protein, it controls the translation of the L11 operon by binding to its mRNA. The protein is Large ribosomal subunit protein uL1 of Psychrobacter arcticus (strain DSM 17307 / VKM B-2377 / 273-4).